A 64-amino-acid polypeptide reads, in one-letter code: Large ribosomal subunit protein bL35 (64 aa).

This sequence belongs to the bacterial ribosomal protein bL35 family.

The sequence is that of Large ribosomal subunit protein bL35 from Coxiella burnetii (strain RSA 331 / Henzerling II).